Here is a 332-residue protein sequence, read N- to C-terminus: Peroxidase C1C (332 aa).

Residues 1-9 (MLHASFSNA) form the signal peptide. Q10 carries the pyrrolidone carboxylic acid modification. Disulfide bonds link C20–C100, C53–C58, C106–C310, and C186–C218. N-linked (GlcNAc...) asparagine glycosylation occurs at N22. H51 serves as the catalytic Proton acceptor. Positions 52, 55, 57, 59, and 61 each coordinate Ca(2+). N-linked (GlcNAc...) asparagine glycosylation occurs at N66. A substrate-binding site is contributed by P148. H179 serves as a coordination point for heme b. T180 contributes to the Ca(2+) binding site. Residues N195, N207, and N223 are each glycosylated (N-linked (GlcNAc...) asparagine). 3 residues coordinate Ca(2+): D231, T234, and D239. N264 carries N-linked (GlcNAc...) asparagine glycosylation.

It belongs to the peroxidase family. Classical plant (class III) peroxidase subfamily. Ca(2+) is required as a cofactor. Requires heme b as cofactor.

It is found in the secreted. The protein resides in the vacuole. It carries out the reaction 2 a phenolic donor + H2O2 = 2 a phenolic radical donor + 2 H2O. Functionally, removal of H(2)O(2), oxidation of toxic reductants, biosynthesis and degradation of lignin, suberization, auxin catabolism, response to environmental stresses such as wounding, pathogen attack and oxidative stress. These functions might be dependent on each isozyme/isoform in each plant tissue. This Armoracia rusticana (Horseradish) protein is Peroxidase C1C (PRXC1C).